Here is a 119-residue protein sequence, read N- to C-terminus: Anamorsin homolog (119 aa).

Polar residues predominate over residues 1–15 (MSSSATSTQAFSLKT). 2 disordered regions span residues 1 to 21 (MSSS…PIPD) and 33 to 119 (LKQA…TDDV). Residues Cys42, Cys49, Cys52, and Cys54 each contribute to the [2Fe-2S] cluster site. Positions 42 to 54 (CTTRRRACKNCVC) are fe-S binding site A. Positions 81, 84, 92, and 95 each coordinate [4Fe-4S] cluster. Short sequence motifs (cx2C motif) lie at residues 81–84 (CGNC) and 92–95 (CANC). The segment at 81 to 95 (CGNCSKGDAFRCANC) is fe-S binding site B.

This sequence belongs to the anamorsin family. Monomer. It depends on [2Fe-2S] cluster as a cofactor. Requires [4Fe-4S] cluster as cofactor.

The protein localises to the cytoplasm. It localises to the mitochondrion intermembrane space. In terms of biological role, component of the cytosolic iron-sulfur (Fe-S) protein assembly (CIA) machinery. Required for the maturation of extramitochondrial Fe-S proteins. Part of an electron transfer chain functioning in an early step of cytosolic Fe-S biogenesis, facilitating the de novo assembly of a [4Fe-4S] cluster on the cytosolic Fe-S scaffold complex. Electrons are transferred from NADPH via a FAD- and FMN-containing diflavin oxidoreductase. Together with the diflavin oxidoreductase, also required for the assembly of the diferric tyrosyl radical cofactor of ribonucleotide reductase (RNR), probably by providing electrons for reduction during radical cofactor maturation in the catalytic small subunit. The polypeptide is Anamorsin homolog (Leishmania infantum).